We begin with the raw amino-acid sequence, 411 residues long: LL-diaminopimelate aminotransferase (411 aa).

Substrate-binding residues include Tyr-15 and Gly-42. Pyridoxal 5'-phosphate-binding positions include Tyr-72, Ala-108–Lys-109, Tyr-132, Asn-188, Tyr-219, and Ser-247–Ser-249. Substrate-binding residues include Lys-109, Tyr-132, and Asn-188. Lys-250 carries the N6-(pyridoxal phosphate)lysine modification. Pyridoxal 5'-phosphate-binding residues include Arg-258 and Asn-293. The substrate site is built by Asn-293 and Arg-389.

Belongs to the class-I pyridoxal-phosphate-dependent aminotransferase family. LL-diaminopimelate aminotransferase subfamily. In terms of assembly, homodimer. It depends on pyridoxal 5'-phosphate as a cofactor.

It carries out the reaction (2S,6S)-2,6-diaminopimelate + 2-oxoglutarate = (S)-2,3,4,5-tetrahydrodipicolinate + L-glutamate + H2O + H(+). It participates in amino-acid biosynthesis; L-lysine biosynthesis via DAP pathway; LL-2,6-diaminopimelate from (S)-tetrahydrodipicolinate (aminotransferase route): step 1/1. In terms of biological role, involved in the synthesis of meso-diaminopimelate (m-DAP or DL-DAP), required for both lysine and peptidoglycan biosynthesis. Catalyzes the direct conversion of tetrahydrodipicolinate to LL-diaminopimelate. Is also able to catalyze the reverse reaction in vitro, i.e. the transamination of LL-diaminopimelate with 2-oxoglutarate to produce tetrahydrodipicolinate and glutamate. Can also use m-DAP instead of LL-DAP as the amino-group donor, and oxaloacetate or pyruvate as the amino-group acceptor. In Desulfitobacterium hafniense (strain DSM 10664 / DCB-2), this protein is LL-diaminopimelate aminotransferase.